The following is a 359-amino-acid chain: Olfactory receptor 8S1 (359 aa).

Topologically, residues 1–25 (MALGNHSTITEFLLLGLSADPNIRA) are extracellular. N-linked (GlcNAc...) asparagine glycosylation is present at Asn-5. Residues 26-46 (LLFVLFLGIYLLTIMENLMLL) traverse the membrane as a helical segment. Residues 47–54 (LMIRADSC) are Cytoplasmic-facing. Residues 55–75 (LHKPMYFFLSHLSFVDLCFSS) form a helical membrane-spanning segment. The Extracellular portion of the chain corresponds to 76 to 99 (VIVPKMLENLLSQRKTISVEGCLA). A disulfide bridge links Cys-97 with Cys-189. Residues 100-120 (QVFFVFVTAGTEACLLSGMAY) form a helical membrane-spanning segment. At 121-139 (DRHAAICRPLLYGQIMGKQ) the chain is on the cytoplasmic side. Residues 140 to 160 (LYMHLVWGSWGLGFLDALINV) traverse the membrane as a helical segment. Residues 161–197 (LLAVNMVFCEAKIIHHYSYEMPSLLPLSCSDISRSLI) lie on the Extracellular side of the membrane. A helical membrane pass occupies residues 198 to 217 (ALLCSTLLHGLGNFLLVFLS). At 218-237 (YTRIISTILSISSTSGRSKA) the chain is on the cytoplasmic side. A helical membrane pass occupies residues 238–258 (FSTCSAHLTAVTLYYGSGLLR). The Extracellular segment spans residues 259-269 (HLMPNSGSPIE). The chain crosses the membrane as a helical span at residues 270–290 (LIFSVQYTVVTPMLNSLIYSL). At 291–359 (KNKEVKGERS…ALRAAPTALP (69 aa)) the chain is on the cytoplasmic side. The tract at residues 301–338 (LRDSSHLPQLHKGQARWKRPAFTEGRREPGHPELSIPV) is disordered.

The protein belongs to the G-protein coupled receptor 1 family.

It is found in the cell membrane. In terms of biological role, odorant receptor. The polypeptide is Olfactory receptor 8S1 (OR8S1) (Homo sapiens (Human)).